A 538-amino-acid polypeptide reads, in one-letter code: Chaperonin GroEL (538 aa).

ATP contacts are provided by residues 29 to 32 (TIGP), 86 to 90 (DGTTT), G413, 476 to 478 (NAA), and D492.

It belongs to the chaperonin (HSP60) family. As to quaternary structure, forms a cylinder of 14 subunits composed of two heptameric rings stacked back-to-back. Interacts with the co-chaperonin GroES.

It is found in the cytoplasm. It carries out the reaction ATP + H2O + a folded polypeptide = ADP + phosphate + an unfolded polypeptide.. Its function is as follows. Together with its co-chaperonin GroES, plays an essential role in assisting protein folding. The GroEL-GroES system forms a nano-cage that allows encapsulation of the non-native substrate proteins and provides a physical environment optimized to promote and accelerate protein folding. This chain is Chaperonin GroEL, found in Staphylococcus aureus (strain NCTC 8325 / PS 47).